Reading from the N-terminus, the 275-residue chain is Lectin 8 (275 aa).

Positions 1–31 (MANSNPKLLVTQNPFSVFLLTFLLLITNVKS) are cleaved as a signal peptide. Asparagine 55 and asparagine 150 each carry an N-linked (GlcNAc...) asparagine glycan.

The protein belongs to the leguminous lectin family.

May be involved in arbuscular mycorrhizal (AM) symbiosis with AM fungi. This Medicago truncatula (Barrel medic) protein is Lectin 8.